Consider the following 477-residue polypeptide: C3a anaphylatoxin chemotactic receptor (477 aa).

Over 1 to 23 the chain is Extracellular; that stretch reads MESFDADTNSTDLHSRPLFQPQD. An N-linked (GlcNAc...) asparagine glycan is attached at N9. The helical transmembrane segment at 24–46 threads the bilayer; it reads IASMVILGLTCLLGLLGNGLVLW. At 47–57 the chain is on the cytoplasmic side; that stretch reads VAGVKMKTTVN. The chain crosses the membrane as a helical span at residues 58–80; that stretch reads TVWFLHLTLADFLCCLSLPFSLA. Residues 81-96 lie on the Extracellular side of the membrane; it reads HLILQGHWPYGLFLCK. C95 and C172 are joined by a disulfide. Residues 97–118 form a helical membrane-spanning segment; sequence LIPSIIILNMFASVFLLTAISL. Residues 119–139 lie on the Cytoplasmic side of the membrane; it reads DRCLIVHKPIWCQNHRNVRTA. The helical transmembrane segment at 140–160 threads the bilayer; it reads FAICGCVWVVAFVMCVPVFVY. Residues 161-333 lie on the Extracellular side of the membrane; that stretch reads RDLFIMDNRS…TPLMAITITR (173 aa). Residue N168 is glycosylated (N-linked (GlcNAc...) asparagine). Sulfotyrosine occurs at positions 174 and 184. N197 and N201 each carry an N-linked (GlcNAc...) asparagine glycan. At Y312 the chain carries Sulfotyrosine. A helical transmembrane segment spans residues 334–353; it reads LVVGFLVPFFIMVICYSLIV. Over 354 to 370 the chain is Cytoplasmic; it reads FRMRKTNFTKSRNKTFR. Residues 371 to 393 traverse the membrane as a helical segment; sequence VAVAVVTVFFICWTPYHLVGVLL. Topologically, residues 394 to 410 are extracellular; that stretch reads LITDPESSLGEAVMSWD. A helical transmembrane segment spans residues 411-431; sequence HMSIALASANSCFNPFLYALL. Residues 432–477 are Cytoplasmic-facing; that stretch reads GKDFRKKARQSIKGILEAAFSEELTHSTNCTQDKASSKRNNMSTDV. S452 carries the post-translational modification Phosphoserine. Residue T456 is modified to Phosphothreonine.

This sequence belongs to the G-protein coupled receptor 1 family. As to quaternary structure, interacts with VGF-derived peptide TLQP-21. Detected in varying levels in all tissues examined except the spleen. Especially abundant in heart and lung.

The protein resides in the cell membrane. Receptor for the chemotactic and inflammatory peptide anaphylatoxin C3a. This receptor stimulates chemotaxis, granule enzyme release and superoxide anion production. The chain is C3a anaphylatoxin chemotactic receptor (C3ar1) from Mus musculus (Mouse).